We begin with the raw amino-acid sequence, 392 residues long: Formate-dependent phosphoribosylglycinamide formyltransferase (392 aa).

N(1)-(5-phospho-beta-D-ribosyl)glycinamide-binding positions include 22–23 and glutamate 82; that span reads EL. ATP contacts are provided by residues arginine 114, lysine 155, 160 to 165, 195 to 198, and glutamate 203; these read SSGKGQ and EGVV. In terms of domain architecture, ATP-grasp spans 119-308; the sequence is RLAAEELQLP…EFALHVRAFL (190 aa). Residues glutamate 267 and glutamate 279 each contribute to the Mg(2+) site. Residues aspartate 286, lysine 355, and 362–363 each bind N(1)-(5-phospho-beta-D-ribosyl)glycinamide; that span reads RR.

The protein belongs to the PurK/PurT family. As to quaternary structure, homodimer.

It carries out the reaction N(1)-(5-phospho-beta-D-ribosyl)glycinamide + formate + ATP = N(2)-formyl-N(1)-(5-phospho-beta-D-ribosyl)glycinamide + ADP + phosphate + H(+). The protein operates within purine metabolism; IMP biosynthesis via de novo pathway; N(2)-formyl-N(1)-(5-phospho-D-ribosyl)glycinamide from N(1)-(5-phospho-D-ribosyl)glycinamide (formate route): step 1/1. In terms of biological role, involved in the de novo purine biosynthesis. Catalyzes the transfer of formate to 5-phospho-ribosyl-glycinamide (GAR), producing 5-phospho-ribosyl-N-formylglycinamide (FGAR). Formate is provided by PurU via hydrolysis of 10-formyl-tetrahydrofolate. The protein is Formate-dependent phosphoribosylglycinamide formyltransferase of Shigella boydii serotype 18 (strain CDC 3083-94 / BS512).